Here is a 166-residue protein sequence, read N- to C-terminus: Peptide methionine sulfoxide reductase MsrA (166 aa).

The active site involves C11.

It belongs to the MsrA Met sulfoxide reductase family.

The enzyme catalyses L-methionyl-[protein] + [thioredoxin]-disulfide + H2O = L-methionyl-(S)-S-oxide-[protein] + [thioredoxin]-dithiol. It carries out the reaction [thioredoxin]-disulfide + L-methionine + H2O = L-methionine (S)-S-oxide + [thioredoxin]-dithiol. Functionally, has an important function as a repair enzyme for proteins that have been inactivated by oxidation. Catalyzes the reversible oxidation-reduction of methionine sulfoxide in proteins to methionine. This chain is Peptide methionine sulfoxide reductase MsrA, found in Mycoplasmopsis pulmonis (strain UAB CTIP) (Mycoplasma pulmonis).